The chain runs to 144 residues: Mediator of RNA polymerase II transcription subunit 9 (144 aa).

The stretch at 85–143 (QDCNHKIFELQKRFESAREQIRQLPGIDFNKEEQQQRLELLRNQLKLKQQLIRKYKDTE) forms a coiled coil.

It belongs to the Mediator complex subunit 9 family. In terms of assembly, component of the Mediator complex.

The protein localises to the nucleus. Its function is as follows. Component of the Mediator complex, a coactivator involved in the regulated transcription of nearly all RNA polymerase II-dependent genes. Mediator functions as a bridge to convey information from gene-specific regulatory proteins to the basal RNA polymerase II transcription machinery. Mediator is recruited to promoters by direct interactions with regulatory proteins and serves as a scaffold for the assembly of a functional preinitiation complex with RNA polymerase II and the general transcription factors. The polypeptide is Mediator of RNA polymerase II transcription subunit 9 (MED9) (Drosophila melanogaster (Fruit fly)).